Reading from the N-terminus, the 701-residue chain is MGHLLSKEPRNRPSQKRPRCCSWCRRRRPLLRLPRRTPAKVPPQPAAPRSRDCFFRGPCMLCFIVHSPGAPAPAGPEEEPPLSPPPRDGAYAAASSSQHLARRYAALAAEDCAAAARRFLLSSAAAAAAAAASASSPASCCKELGLAAAAAWEQQGRSLFLASLGPVRFLGPPAAVQLFRGPTPSPAELPTPPEMVCKRKGAGVPACTPCKQPRCGGGGCGGGGGGGGGGGPAGGGASPPRPPDAGCCQAPEQPPQPLCPPPSSPTSEGAPTEAGGDAVRAGGTAPLSAQQQHECGDADCRESPENPCDCHREPPPETPDINQLPPSILLKIFSNLSLDERCLSASLVCKYWRDLCLDFQFWKQLDLSSRQQVTDELLEKIASRSQNIIEINISDCRSMSDNGVCVLAFKCPGLLRYTAYRCKQLSDTSIIAVASHCPLLQKVHVGNQDKLTDEGLKQLGSKCRELKDIHFGQCYKISDEGMIVIAKGCLKLQRIYMQENKLVTDQSVKAFAEHCPELQYVGFMGCSVTSKGVIHLTKLRNLSSLDLRHITELDNETVMEIVKRCKNLSSLNLCLNWIINDRCVEVIAKEGQNLKELYLVSCKITDYALIAIGRYSMTIETVDVGWCKEITDQGATLIAQSSKSLRYLGLMRCDKVNEVTVEQLVQQYPHITFSTVLQDCKRTLERAYQMGWTPNMSAASS.

A compositionally biased stretch (basic and acidic residues) spans 1–11 (MGHLLSKEPRN). Disordered stretches follow at residues 1 to 20 (MGHL…RPRC), 72 to 94 (APAG…YAAA), and 227 to 300 (GGGG…DADC). A compositionally biased stretch (gly residues) spans 227-237 (GGGGGPAGGGA). The span at 252–264 (EQPPQPLCPPPSS) shows a compositional bias: pro residues. An F-box domain is found at 318-365 (TPDINQLPPSILLKIFSNLSLDERCLSASLVCKYWRDLCLDFQFWKQL).

Belongs to the FBXL17 family. Part of the SCF (SKP1-CUL1-F-box) E3 ubiquitin-protein ligase complex SCF(FBXL17) composed of CUL1, SKP1, RBX1 and FBXL17. Interacts with BTB domain-containing proteins such as KLHL12, BCL6 and BACH1; specifically recognizes and binds a conserved degron of non-consecutive residues present at the interface of BTB dimers of aberrant composition. Interacts with SUFU. Interacts with PRMT1.

The protein localises to the cytoplasm. Its subcellular location is the nucleus. Its function is as follows. Substrate-recognition component of the SCF(FBXL17) E3 ubiquitin ligase complex, a key component of a quality control pathway required to ensure functional dimerization of BTB domain-containing proteins (dimerization quality control, DQC). FBXL17 specifically recognizes and binds a conserved degron of non-consecutive residues present at the interface of BTB dimers of aberrant composition: aberrant BTB dimer are then ubiquitinated by the SCF(FBXL17) complex and degraded by the proteasome. The ability of the SCF(FBXL17) complex to eliminate compromised BTB dimers is required for the differentiation and survival of neural crest and neuronal cells. The SCF(FBXL17) complex mediates ubiquitination and degradation of BACH1. The SCF(FBXL17) complex is also involved in the regulation of the hedgehog/smoothened (Hh) signaling pathway by mediating the ubiquitination and degradation of SUFU, allowing the release of GLI1 from SUFU for proper Hh signal transduction. The SCF(FBXL17) complex mediates ubiquitination and degradation of PRMT1. The sequence is that of F-box/LRR-repeat protein 17 from Homo sapiens (Human).